We begin with the raw amino-acid sequence, 90 residues long: DNA-binding protein HU-1 (90 aa).

Phosphothreonine is present on Thr4. A disordered region spans residues 55 to 90 (RSARKGRNPQTGEEIEIPATKNPAFKPGKQLKDAVN).

It belongs to the bacterial histone-like protein family. Homodimer.

In terms of biological role, histone-like DNA-binding protein which is capable of wrapping DNA to stabilize it, and thus to prevent its denaturation under extreme environmental conditions. The sequence is that of DNA-binding protein HU-1 (hup1) from Halalkalibacterium halodurans (strain ATCC BAA-125 / DSM 18197 / FERM 7344 / JCM 9153 / C-125) (Bacillus halodurans).